A 66-amino-acid polypeptide reads, in one-letter code: Large ribosomal subunit protein bL31 (66 aa).

Residues cysteine 16, cysteine 18, cysteine 36, and cysteine 39 each coordinate Zn(2+).

It belongs to the bacterial ribosomal protein bL31 family. Type A subfamily. In terms of assembly, part of the 50S ribosomal subunit. Zn(2+) is required as a cofactor.

In terms of biological role, binds the 23S rRNA. The sequence is that of Large ribosomal subunit protein bL31 from Sulfurovum sp. (strain NBC37-1).